Consider the following 135-residue polypeptide: Ribosome-binding factor A (135 aa).

A disordered region spans residues 115–135; it reads VNEDKRKQQDSGREEDQAGEE. Over residues 116 to 135 the composition is skewed to basic and acidic residues; that stretch reads NEDKRKQQDSGREEDQAGEE.

The protein belongs to the RbfA family. In terms of assembly, monomer. Binds 30S ribosomal subunits, but not 50S ribosomal subunits or 70S ribosomes.

It localises to the cytoplasm. Its function is as follows. One of several proteins that assist in the late maturation steps of the functional core of the 30S ribosomal subunit. Associates with free 30S ribosomal subunits (but not with 30S subunits that are part of 70S ribosomes or polysomes). Required for efficient processing of 16S rRNA. May interact with the 5'-terminal helix region of 16S rRNA. The sequence is that of Ribosome-binding factor A from Vibrio campbellii (strain ATCC BAA-1116).